A 235-amino-acid polypeptide reads, in one-letter code: Small ribosomal subunit protein uS3 (235 aa).

The KH type-2 domain occupies 39–107 (VRKFLNKELM…PAQINIAEVK (69 aa)).

The protein belongs to the universal ribosomal protein uS3 family. Part of the 30S ribosomal subunit. Forms a tight complex with proteins S10 and S14.

Its function is as follows. Binds the lower part of the 30S subunit head. Binds mRNA in the 70S ribosome, positioning it for translation. The sequence is that of Small ribosomal subunit protein uS3 from Actinobacillus succinogenes (strain ATCC 55618 / DSM 22257 / CCUG 43843 / 130Z).